Consider the following 345-residue polypeptide: N-acetyl-gamma-glutamyl-phosphate reductase (345 aa).

The active site involves Cys149.

The protein belongs to the NAGSA dehydrogenase family. Type 1 subfamily.

The protein localises to the cytoplasm. It catalyses the reaction N-acetyl-L-glutamate 5-semialdehyde + phosphate + NADP(+) = N-acetyl-L-glutamyl 5-phosphate + NADPH + H(+). Its pathway is amino-acid biosynthesis; L-arginine biosynthesis; N(2)-acetyl-L-ornithine from L-glutamate: step 3/4. In terms of biological role, catalyzes the NADPH-dependent reduction of N-acetyl-5-glutamyl phosphate to yield N-acetyl-L-glutamate 5-semialdehyde. The polypeptide is N-acetyl-gamma-glutamyl-phosphate reductase (Herminiimonas arsenicoxydans).